The sequence spans 222 residues: Ribonuclease T (222 aa).

The Exonuclease domain maps to 20 to 194 (VVIDVETAGF…YDTERTAELF (175 aa)). Positions 23, 25, 181, and 186 each coordinate Mg(2+). Residue histidine 181 is the Proton donor/acceptor of the active site.

This sequence belongs to the RNase T family. In terms of assembly, homodimer. It depends on Mg(2+) as a cofactor.

Functionally, trims short 3' overhangs of a variety of RNA species, leaving a one or two nucleotide 3' overhang. Responsible for the end-turnover of tRNA: specifically removes the terminal AMP residue from uncharged tRNA (tRNA-C-C-A). Also appears to be involved in tRNA biosynthesis. This Shewanella sp. (strain MR-4) protein is Ribonuclease T.